A 297-amino-acid polypeptide reads, in one-letter code: 4-hydroxy-tetrahydrodipicolinate synthase (297 aa).

Residue threonine 46 participates in pyruvate binding. Residue tyrosine 136 is the Proton donor/acceptor of the active site. Lysine 165 functions as the Schiff-base intermediate with substrate in the catalytic mechanism. Threonine 206 contacts pyruvate.

Belongs to the DapA family. As to quaternary structure, homotetramer; dimer of dimers.

It localises to the cytoplasm. It carries out the reaction L-aspartate 4-semialdehyde + pyruvate = (2S,4S)-4-hydroxy-2,3,4,5-tetrahydrodipicolinate + H2O + H(+). It participates in amino-acid biosynthesis; L-lysine biosynthesis via DAP pathway; (S)-tetrahydrodipicolinate from L-aspartate: step 3/4. Catalyzes the condensation of (S)-aspartate-beta-semialdehyde [(S)-ASA] and pyruvate to 4-hydroxy-tetrahydrodipicolinate (HTPA). The sequence is that of 4-hydroxy-tetrahydrodipicolinate synthase from Sulfurimonas denitrificans (strain ATCC 33889 / DSM 1251) (Thiomicrospira denitrificans (strain ATCC 33889 / DSM 1251)).